The following is a 124-amino-acid chain: Fluoride-specific ion channel FluC (124 aa).

4 helical membrane-spanning segments follow: residues 5-25 (ILAV…AGTW), 38-58 (TLAV…WFLL), 69-89 (GLIV…LDTL), and 97-117 (ALIA…ATWA). Na(+)-binding residues include Gly-76 and Thr-79.

Belongs to the fluoride channel Fluc/FEX (TC 1.A.43) family.

The protein resides in the cell inner membrane. It carries out the reaction fluoride(in) = fluoride(out). With respect to regulation, na(+) is not transported, but it plays an essential structural role and its presence is essential for fluoride channel function. Its function is as follows. Fluoride-specific ion channel. Important for reducing fluoride concentration in the cell, thus reducing its toxicity. The protein is Fluoride-specific ion channel FluC of Pseudomonas fluorescens (strain SBW25).